The following is a 177-amino-acid chain: ATP synthase subunit delta (177 aa).

The protein belongs to the ATPase delta chain family. In terms of assembly, F-type ATPases have 2 components, F(1) - the catalytic core - and F(0) - the membrane proton channel. F(1) has five subunits: alpha(3), beta(3), gamma(1), delta(1), epsilon(1). F(0) has three main subunits: a(1), b(2) and c(10-14). The alpha and beta chains form an alternating ring which encloses part of the gamma chain. F(1) is attached to F(0) by a central stalk formed by the gamma and epsilon chains, while a peripheral stalk is formed by the delta and b chains.

The protein localises to the cell inner membrane. Functionally, f(1)F(0) ATP synthase produces ATP from ADP in the presence of a proton or sodium gradient. F-type ATPases consist of two structural domains, F(1) containing the extramembraneous catalytic core and F(0) containing the membrane proton channel, linked together by a central stalk and a peripheral stalk. During catalysis, ATP synthesis in the catalytic domain of F(1) is coupled via a rotary mechanism of the central stalk subunits to proton translocation. In terms of biological role, this protein is part of the stalk that links CF(0) to CF(1). It either transmits conformational changes from CF(0) to CF(1) or is implicated in proton conduction. This chain is ATP synthase subunit delta, found in Idiomarina loihiensis (strain ATCC BAA-735 / DSM 15497 / L2-TR).